A 160-amino-acid polypeptide reads, in one-letter code: Secreted RxLR effector protein RXLR-C11 (160 aa).

Residues 1–19 form the signal peptide; it reads MHFSLVLLVFAAIVIPICA. A RxLR-dEER motif is present at residues 58–75; the sequence is RLLRMNDKAVISDHEEER.

It belongs to the RxLR effector family.

It localises to the secreted. It is found in the host cell membrane. The protein resides in the host nucleus. Its function is as follows. Secreted effector that suppresses pattern-triggered immunity (PTI) in plant host. This is Secreted RxLR effector protein RXLR-C11 from Plasmopara halstedii (Downy mildew of sunflower).